Here is an 84-residue protein sequence, read N- to C-terminus: MQKLNKSSSKGKNNIETEEAEDSAGRGSTYGFGPYGGGGFSSKSSGEEATTGDTKKLKGEVEEGTGKLLHSKKLVDKGERKESE.

Low complexity predominate over residues 1–14 (MQKLNKSSSKGKNN). The disordered stretch occupies residues 1–84 (MQKLNKSSSK…VDKGERKESE (84 aa)). Over residues 28 to 40 (STYGFGPYGGGGF) the composition is skewed to gly residues. Composition is skewed to basic and acidic residues over residues 53 to 65 (DTKK…EEGT) and 73 to 84 (KLVDKGERKESE).

This is an uncharacterized protein from Schizosaccharomyces pombe (strain 972 / ATCC 24843) (Fission yeast).